Consider the following 471-residue polypeptide: Soluble pyridine nucleotide transhydrogenase (471 aa).

41-50 (EREPSVGGGC) lines the FAD pocket.

Belongs to the class-I pyridine nucleotide-disulfide oxidoreductase family. It depends on FAD as a cofactor.

The protein resides in the cytoplasm. It catalyses the reaction NAD(+) + NADPH = NADH + NADP(+). Conversion of NADPH, generated by peripheral catabolic pathways, to NADH, which can enter the respiratory chain for energy generation. This chain is Soluble pyridine nucleotide transhydrogenase, found in Aliivibrio fischeri (strain ATCC 700601 / ES114) (Vibrio fischeri).